Here is a 629-residue protein sequence, read N- to C-terminus: tRNA uridine 5-carboxymethylaminomethyl modification enzyme MnmG (629 aa).

Residues 18-23 (GGGHAG), V130, and S188 contribute to the FAD site. 280–294 (GPRYCPSIEDKVVRF) is a binding site for NAD(+). Q377 contributes to the FAD binding site.

It belongs to the MnmG family. Homodimer. Heterotetramer of two MnmE and two MnmG subunits. Requires FAD as cofactor.

It localises to the cytoplasm. Its function is as follows. NAD-binding protein involved in the addition of a carboxymethylaminomethyl (cmnm) group at the wobble position (U34) of certain tRNAs, forming tRNA-cmnm(5)s(2)U34. This Granulibacter bethesdensis (strain ATCC BAA-1260 / CGDNIH1) protein is tRNA uridine 5-carboxymethylaminomethyl modification enzyme MnmG.